The primary structure comprises 610 residues: UvrABC system protein C (610 aa).

The GIY-YIG domain occupies 16–94 (SQPGVYRMYD…IQRYQPRYNV (79 aa)). The UVR domain maps to 204 to 239 (SQVIEGLIKRMEEASQALRFEEAARIRDQIHAVRQV).

Belongs to the UvrC family. In terms of assembly, interacts with UvrB in an incision complex.

The protein localises to the cytoplasm. In terms of biological role, the UvrABC repair system catalyzes the recognition and processing of DNA lesions. UvrC both incises the 5' and 3' sides of the lesion. The N-terminal half is responsible for the 3' incision and the C-terminal half is responsible for the 5' incision. The sequence is that of UvrABC system protein C from Proteus mirabilis (strain HI4320).